Reading from the N-terminus, the 664-residue chain is MNRARKTSSCGCFRSAFCLLKPSTSSASEEHGDSDKKLLSVQLITPRDEEEQTSSRSIKIPPLDLNGLDCKKNAVAARRAGRRRTSEGGGVRGKGHFAEVVLDGLQRPVSLLRNQKEKSNSDDNCQEKEPTSPSSSRKKSYDNAPALESLEKLRYILHQLNSGQLPLEDLKRNIEYAALVLETAYMDETRRICDEDDDLAEVTPETVPDEVREWLAATFTRQNAGKKRDKPKFKSVANAIRTGIFFEKLFRKQQVVQCPIPPEIAELMKEVCTWSFSPFQLNEVSEGHALKYVGFELFNRYGFMDRFKVPLTALENYLSALEVGYSKHNNPYHNVVHAADVTQSSHFMLSQTGLANSLGDLELLAVLFGALIHDYEHTGHTNNFHIQSQSQFAMLYNDRSVLENHHVSSCFRLMKEDDKNILTHLTRDEYKELRNMVIEIVLATDMSTHFMQIKTMKSMLSLPEGIDKNKALCLIVHACDISHPAKPWNLHERWTEGVLEEFFRQGDLEASMGLPYSPLCDRHTVHVADSQIGFIDFIVEPTMVVCGELLVKMVEPLVSLPPTDSLFPPSVDGGDDKSPSNALSPLPDLRNSSTSPSSIRRIPLNYAGKLDIPTPWMKFLHENKAHWKERAAKEEEERKIKEAAEAEAAAKQVEENKENGVTTN.

Disordered stretches follow at residues 24-60 (TSSASEEHGDSDKKLLSVQLITPRDEEEQTSSRSIKI) and 113-142 (RNQKEKSNSDDNCQEKEPTSPSSSRKKSYD). 2 stretches are compositionally biased toward basic and acidic residues: residues 28 to 38 (SEEHGDSDKKL) and 114 to 130 (NQKEKSNSDDNCQEKEP). Residues 256 to 634 (VQCPIPPEIA…AHWKERAAKE (379 aa)) enclose the PDEase domain. Histidine 333 (proton donor) is an active-site residue. A divalent metal cation-binding residues include histidine 337, histidine 373, aspartate 374, and aspartate 480. Disordered regions lie at residues 564–597 (DSLFPPSVDGGDDKSPSNALSPLPDLRNSSTSPS) and 630–664 (RAAKEEEERKIKEAAEAEAAAKQVEENKENGVTTN). Residues 630–644 (RAAKEEEERKIKEAA) show a composition bias toward basic and acidic residues.

Belongs to the cyclic nucleotide phosphodiesterase family. Interacts with cmd-1 in the presence of Ca(2+). The cofactor is a divalent metal cation. As to expression, expressed in AFD thermosensory neurons.

It carries out the reaction a nucleoside 3',5'-cyclic phosphate + H2O = a nucleoside 5'-phosphate + H(+). In terms of biological role, redundantly with pde-5, plays a role in the AFD thermosensory neurons to regulate microvilli receptive ending morphology, possibly by regulating cGMP levels. The polypeptide is Probable 3',5'-cyclic phosphodiesterase pde-1 (pde-1) (Caenorhabditis elegans).